Here is a 498-residue protein sequence, read N- to C-terminus: Fascin-3 (498 aa).

Belongs to the fascin family. Expressed in testis.

The protein resides in the cytoplasm. It localises to the cytoskeleton. In terms of biological role, acts as an actin bundling protein. This Mus musculus (Mouse) protein is Fascin-3 (Fscn3).